A 188-amino-acid chain; its full sequence is Urease accessory protein UreE (188 aa).

Positions 142 to 174 (AYQSQAGAGHHHHHDHDHGHSHDHSHTHSHADS) are disordered. Positions 157–172 (HDHGHSHDHSHTHSHA) are enriched in basic and acidic residues.

Belongs to the UreE family.

The protein resides in the cytoplasm. Functionally, involved in urease metallocenter assembly. Binds nickel. Probably functions as a nickel donor during metallocenter assembly. The sequence is that of Urease accessory protein UreE from Tolumonas auensis (strain DSM 9187 / NBRC 110442 / TA 4).